Here is a 651-residue protein sequence, read N- to C-terminus: Protein EXECUTER 2, chloroplastic (651 aa).

The transit peptide at 1–69 directs the protein to the chloroplast; sequence MATTQPCLIG…KAPSLSCLRN (69 aa). The UVR domain maps to 103-138; it reads ESVVSLLKSQLEDAVEKEDFEEAVKLKQAISEATVD. Positions 330-359 are disordered; sequence DATEELVGEGTEETNSSDDEEEVEEEENDS.

Its subcellular location is the plastid. The protein localises to the chloroplast. In terms of biological role, together with EX1, enables higher plants to perceive singlet oxygen as a stress signal in plastid that activates a genetically determined nuclear stress response program which triggers a programmed cell death (PCD). This transfer of singlet oxygen-induced stress-related signals from the plastid to the nucleus that triggers genetically controlled PCD pathway is unique to photosynthetic eukaryotes and operates under mild stress conditions, impeding photosystem II (PSII) without causing photooxidative damage of the plant. This chain is Protein EXECUTER 2, chloroplastic, found in Arabidopsis thaliana (Mouse-ear cress).